The chain runs to 183 residues: Transposon gamma-delta resolvase (183 aa).

The 136-residue stretch at 2–137 (RLFGYARVST…EGRQEAMAKG (136 aa)) folds into the Resolvase/invertase-type recombinase catalytic domain. Ser10 acts as the O-(5'-phospho-DNA)-serine intermediate in catalysis. A DNA-binding region (H-T-H motif) is located at residues 161-180 (ASHISKTMNIARSTVYKVIN).

This sequence belongs to the site-specific recombinase resolvase family.

Its function is as follows. This protein catalyzes the site-specific recombination of the transposon and also regulates its frequency of transposition. The protein is Transposon gamma-delta resolvase (tnpR) of Escherichia coli (strain K12).